The primary structure comprises 93 residues: Small ribosomal subunit protein uS15 (93 aa).

Belongs to the universal ribosomal protein uS15 family. As to quaternary structure, part of the 30S ribosomal subunit. Forms a bridge to the 50S subunit in the 70S ribosome, contacting the 23S rRNA.

One of the primary rRNA binding proteins, it binds directly to 16S rRNA where it helps nucleate assembly of the platform of the 30S subunit by binding and bridging several RNA helices of the 16S rRNA. Its function is as follows. Forms an intersubunit bridge (bridge B4) with the 23S rRNA of the 50S subunit in the ribosome. In Anaplasma marginale (strain St. Maries), this protein is Small ribosomal subunit protein uS15.